The following is a 452-amino-acid chain: Tripartite motif-containing protein 49C (452 aa).

The RING-type zinc-finger motif lies at 15–56 (CPLCMNYFIDPVTIDCGHSFCRPCFYLNWQDIPFLVQCSECT). The B box-type zinc finger occupies 88-129 (SEEQMCGTHRETKKIFCEVDRSLLCLLCSSSQEHRYHRHRPI). Positions 93, 96, 115, and 121 each coordinate Zn(2+). Positions 269–452 (ELSAGPITGL…LRPIFCCIHF (184 aa)) constitute a B30.2/SPRY domain.

The chain is Tripartite motif-containing protein 49C (TRIM49C) from Homo sapiens (Human).